Here is a 428-residue protein sequence, read N- to C-terminus: Glutamyl-tRNA reductase (428 aa).

Residues 49-52 (TCNR), Ser109, 114-116 (EGQ), and Gln120 each bind substrate. Cys50 (nucleophile) is an active-site residue. Residue 189-194 (GAGKMS) coordinates NADP(+).

The protein belongs to the glutamyl-tRNA reductase family. In terms of assembly, homodimer.

It carries out the reaction (S)-4-amino-5-oxopentanoate + tRNA(Glu) + NADP(+) = L-glutamyl-tRNA(Glu) + NADPH + H(+). It participates in porphyrin-containing compound metabolism; protoporphyrin-IX biosynthesis; 5-aminolevulinate from L-glutamyl-tRNA(Glu): step 1/2. The protein operates within porphyrin-containing compound metabolism; chlorophyll biosynthesis. In terms of biological role, catalyzes the NADPH-dependent reduction of glutamyl-tRNA(Glu) to glutamate 1-semialdehyde (GSA). The protein is Glutamyl-tRNA reductase of Microcystis aeruginosa (strain NIES-843 / IAM M-2473).